The following is a 238-amino-acid chain: Ditrans,polycis-undecaprenyl-diphosphate synthase ((2E,6E)-farnesyl-diphosphate specific) (238 aa).

Asp14 is a catalytic residue. Asp14 contacts Mg(2+). Substrate-binding positions include 15 to 18, Trp19, Arg27, His31, and 59 to 61; these read GNGR and SSE. The active-site Proton acceptor is the Asn62. Substrate is bound by residues Trp63, Arg65, Arg182, and 188 to 190; that span reads RIS. Glu201 contributes to the Mg(2+) binding site.

This sequence belongs to the UPP synthase family. Homodimer. It depends on Mg(2+) as a cofactor.

It carries out the reaction 8 isopentenyl diphosphate + (2E,6E)-farnesyl diphosphate = di-trans,octa-cis-undecaprenyl diphosphate + 8 diphosphate. In terms of biological role, catalyzes the sequential condensation of isopentenyl diphosphate (IPP) with (2E,6E)-farnesyl diphosphate (E,E-FPP) to yield (2Z,6Z,10Z,14Z,18Z,22Z,26Z,30Z,34E,38E)-undecaprenyl diphosphate (di-trans,octa-cis-UPP). UPP is the precursor of glycosyl carrier lipid in the biosynthesis of bacterial cell wall polysaccharide components such as peptidoglycan and lipopolysaccharide. The chain is Ditrans,polycis-undecaprenyl-diphosphate synthase ((2E,6E)-farnesyl-diphosphate specific) from Legionella pneumophila (strain Paris).